The primary structure comprises 197 residues: Recombination protein RecR (197 aa).

A C4-type zinc finger spans residues 57 to 72 (CSVCFAITEDDPCWIC). The Toprim domain maps to 79–174 (GTICVVEEPQ…KVTRLAHGIP (96 aa)).

The protein belongs to the RecR family.

In terms of biological role, may play a role in DNA repair. It seems to be involved in an RecBC-independent recombinational process of DNA repair. It may act with RecF and RecO. The protein is Recombination protein RecR of Geobacter sp. (strain M21).